The following is a 328-amino-acid chain: MSEVTLQAFLDDWAGADPLRCAVAATVERLAEAGVSIAELVARGPLAEDFGKVRGDEANAGGDAQKELDVIAEEELVDALGRAPVAFLASEESETPIPLDPHGRVVVAVDPLDGSSNIDTNVSIGTIFSILPYDLEQHPDPAAALLQPGSAQIAAGFLVYGPATILVSSLGQGTQVFVFDHDTATFILAREKVEIPAATKEYGINQSNVRHWAKATQRYIDDCLAGKDGPRGKDFNMRWVGSLVADAFRIFTRGGVYLYPGDSRKGYADGRLRLIYEANPIAFVTEQAGGAATDGTTRILDIQPKQIHQRIPLVFGSREEVAHIASYY.

4 residues coordinate Mg(2+): E91, D110, L112, and D113. Substrate is bound by residues 113–116 (DGSS), N205, and 257–259 (YLY). E277 serves as a coordination point for Mg(2+).

This sequence belongs to the FBPase class 1 family. Homotetramer. Mg(2+) is required as a cofactor.

Its subcellular location is the cytoplasm. The enzyme catalyses beta-D-fructose 1,6-bisphosphate + H2O = beta-D-fructose 6-phosphate + phosphate. Its pathway is carbohydrate biosynthesis; gluconeogenesis. This Azorhizobium caulinodans (strain ATCC 43989 / DSM 5975 / JCM 20966 / LMG 6465 / NBRC 14845 / NCIMB 13405 / ORS 571) protein is Fructose-1,6-bisphosphatase class 1.